The chain runs to 135 residues: D-ribose pyranase (135 aa).

Residue His-20 is the Proton donor of the active site. Substrate is bound by residues Asp-28, His-102, and Tyr-124–Asn-126.

It belongs to the RbsD / FucU family. RbsD subfamily. As to quaternary structure, homodecamer.

Its subcellular location is the cytoplasm. The enzyme catalyses beta-D-ribopyranose = beta-D-ribofuranose. The protein operates within carbohydrate metabolism; D-ribose degradation; D-ribose 5-phosphate from beta-D-ribopyranose: step 1/2. Its function is as follows. Catalyzes the interconversion of beta-pyran and beta-furan forms of D-ribose. The sequence is that of D-ribose pyranase from Thermotoga petrophila (strain ATCC BAA-488 / DSM 13995 / JCM 10881 / RKU-1).